We begin with the raw amino-acid sequence, 229 residues long: Flagellar L-ring protein (229 aa).

Positions 1-25 (MKQVRLLPSAAVRAACALAAAALAG) are cleaved as a signal peptide. A lipid anchor (N-palmitoyl cysteine) is attached at Cys26. A lipid anchor (S-diacylglycerol cysteine) is attached at Cys26.

This sequence belongs to the FlgH family. As to quaternary structure, the basal body constitutes a major portion of the flagellar organelle and consists of four rings (L,P,S, and M) mounted on a central rod.

It localises to the cell outer membrane. It is found in the bacterial flagellum basal body. Functionally, assembles around the rod to form the L-ring and probably protects the motor/basal body from shearing forces during rotation. The protein is Flagellar L-ring protein of Burkholderia multivorans (strain ATCC 17616 / 249).